Here is a 249-residue protein sequence, read N- to C-terminus: Serine acetyltransferase (249 aa).

This sequence belongs to the transferase hexapeptide repeat family.

Its subcellular location is the cytoplasm. The catalysed reaction is L-serine + acetyl-CoA = O-acetyl-L-serine + CoA. The protein operates within amino-acid biosynthesis; L-cysteine biosynthesis; L-cysteine from L-serine: step 1/2. The sequence is that of Serine acetyltransferase (cysE) from Synechocystis sp. (strain ATCC 27184 / PCC 6803 / Kazusa).